Reading from the N-terminus, the 439-residue chain is Arginine biosynthesis bifunctional protein ArgJ, mitochondrial (439 aa).

Positions 175, 201, 212, 301, 434, and 439 each coordinate substrate. The active-site Nucleophile is threonine 212.

The protein belongs to the ArgJ family. In terms of assembly, heterodimer of an alpha and a beta chain. Post-translationally, the alpha and beta chains are autoproteolytically processed from a single precursor protein within the mitochondrion.

It localises to the mitochondrion matrix. The catalysed reaction is N(2)-acetyl-L-ornithine + L-glutamate = N-acetyl-L-glutamate + L-ornithine. It carries out the reaction L-glutamate + acetyl-CoA = N-acetyl-L-glutamate + CoA + H(+). Its pathway is amino-acid biosynthesis; L-arginine biosynthesis; L-ornithine and N-acetyl-L-glutamate from L-glutamate and N(2)-acetyl-L-ornithine (cyclic): step 1/1. It participates in amino-acid biosynthesis; L-arginine biosynthesis; N(2)-acetyl-L-ornithine from L-glutamate: step 1/4. In terms of biological role, catalyzes two activities which are involved in the cyclic version of arginine biosynthesis: the synthesis of acetylglutamate from glutamate and acetyl-CoA, and of ornithine by transacetylation between acetylornithine and glutamate. This chain is Arginine biosynthesis bifunctional protein ArgJ, mitochondrial (ECM42), found in Candida albicans (strain SC5314 / ATCC MYA-2876) (Yeast).